Reading from the N-terminus, the 121-residue chain is Heme-degrading monooxygenase (121 aa).

The region spanning 2–101 (IIVTNTIKVE…EQREDRKGIV (100 aa)) is the ABM domain. Asn6 contacts Fe cation. A disordered region spans residues 76–98 (KSDSFKKAHGRTKDTREQREDRK). Residues 78–98 (DSFKKAHGRTKDTREQREDRK) are compositionally biased toward basic and acidic residues. A heme-binding site is contributed by His84.

Belongs to the antibiotic biosynthesis monooxygenase family. Heme-degrading monooxygenase IsdG subfamily. In terms of assembly, homodimer.

Its subcellular location is the cytoplasm. The enzyme catalyses heme b + 3 reduced [NADPH--hemoprotein reductase] + 3 O2 = biliverdin IXalpha + CO + Fe(2+) + 3 oxidized [NADPH--hemoprotein reductase] + 3 H2O + H(+). Allows bacterial pathogens to use the host heme as an iron source. Catalyzes the oxidative degradation of the heme macrocyclic porphyrin ring to the biliverdin in the presence of a suitable electron donor such as ascorbate or NADPH--cytochrome P450 reductase, with subsequent release of free iron. This is Heme-degrading monooxygenase from Listeria welshimeri serovar 6b (strain ATCC 35897 / DSM 20650 / CCUG 15529 / CIP 8149 / NCTC 11857 / SLCC 5334 / V8).